Here is a 628-residue protein sequence, read N- to C-terminus: Serine/threonine-protein phosphatase 2A regulatory subunit psrA (628 aa).

A compositionally biased stretch (polar residues) spans 1–22 (MKNDHINYQQNLSQSPILNSNK). 3 disordered regions span residues 1–61 (MKND…QIPF), 500–558 (KKKQ…DKPS), and 577–628 (SSHR…YTFT). 2 stretches are compositionally biased toward low complexity: residues 23–58 (NQTQ…SPQQ) and 524–547 (QINQ…NNNN). The span at 600–618 (NNHTNHDSEIENEVKEDFR) shows a compositional bias: basic and acidic residues.

It belongs to the phosphatase 2A regulatory subunit B56 family. In terms of assembly, PP2A consists of a trimeric holoenzyme, composed of a 37 kDa catalytic subunit (C subunit) and a 65 kDa constant regulatory subunit (A subunit), that associates with a variety of regulatory subunits (B subunit) such as phr2AB (B55) and psrA (B56 homolog). The trimer may partially dissociates into a core 'AC' dimer equally active compared to the trimer. Seems to play a role in proper anterior patterning (pstO and pstAB).

It is found in the cytoplasm. The protein localises to the cytosol. In terms of biological role, involved in developmental cell fate decision. In Dictyostelium discoideum (Social amoeba), this protein is Serine/threonine-protein phosphatase 2A regulatory subunit psrA (psrA).